The following is a 258-amino-acid chain: Hydroxyacylglutathione hydrolase (258 aa).

His54, His56, Asp58, His59, His113, Asp138, and His176 together coordinate Zn(2+).

The protein belongs to the metallo-beta-lactamase superfamily. Glyoxalase II family. As to quaternary structure, monomer. It depends on Zn(2+) as a cofactor.

The catalysed reaction is an S-(2-hydroxyacyl)glutathione + H2O = a 2-hydroxy carboxylate + glutathione + H(+). It functions in the pathway secondary metabolite metabolism; methylglyoxal degradation; (R)-lactate from methylglyoxal: step 2/2. Thiolesterase that catalyzes the hydrolysis of S-D-lactoyl-glutathione to form glutathione and D-lactic acid. The sequence is that of Hydroxyacylglutathione hydrolase from Synechococcus sp. (strain ATCC 27144 / PCC 6301 / SAUG 1402/1) (Anacystis nidulans).